A 201-amino-acid chain; its full sequence is 8-oxoguanine DNA glycosylase/AP lyase (201 aa).

Active-site residues include Lys126 and Asp144.

This sequence belongs to the type-2 OGG1 family.

It carries out the reaction 2'-deoxyribonucleotide-(2'-deoxyribose 5'-phosphate)-2'-deoxyribonucleotide-DNA = a 3'-end 2'-deoxyribonucleotide-(2,3-dehydro-2,3-deoxyribose 5'-phosphate)-DNA + a 5'-end 5'-phospho-2'-deoxyribonucleoside-DNA + H(+). Catalyzes the excision of an oxidatively damaged form of guanine (7,8-dihydro-8-oxoguanine = 8-oxoG) from DNA. Also cleaves the DNA backbone at apurinic/apyrimidinic sites (AP sites). In Metallosphaera sedula (strain ATCC 51363 / DSM 5348 / JCM 9185 / NBRC 15509 / TH2), this protein is 8-oxoguanine DNA glycosylase/AP lyase.